The primary structure comprises 441 residues: Ribosomal protein uS12 methylthiotransferase RimO (441 aa).

Residues 8 to 118 enclose the MTTase N-terminal domain; the sequence is PKIGFVSLGC…VLQHVHHYVP (111 aa). [4Fe-4S] cluster is bound by residues C17, C53, C82, C150, C154, and C157. One can recognise a Radical SAM core domain in the interval 136 to 373; sequence LTPRHYAYLK…MQLQQQISAE (238 aa). The region spanning 376 to 441 is the TRAM domain; sequence QEKVGREILV…DEYDLWGSRV (66 aa).

It belongs to the methylthiotransferase family. RimO subfamily. [4Fe-4S] cluster is required as a cofactor.

It localises to the cytoplasm. It catalyses the reaction L-aspartate(89)-[ribosomal protein uS12]-hydrogen + (sulfur carrier)-SH + AH2 + 2 S-adenosyl-L-methionine = 3-methylsulfanyl-L-aspartate(89)-[ribosomal protein uS12]-hydrogen + (sulfur carrier)-H + 5'-deoxyadenosine + L-methionine + A + S-adenosyl-L-homocysteine + 2 H(+). Its function is as follows. Catalyzes the methylthiolation of an aspartic acid residue of ribosomal protein uS12. This Salmonella paratyphi A (strain ATCC 9150 / SARB42) protein is Ribosomal protein uS12 methylthiotransferase RimO.